Reading from the N-terminus, the 86-residue chain is Large ribosomal subunit protein bL31B (86 aa).

Belongs to the bacterial ribosomal protein bL31 family. Type B subfamily. In terms of assembly, part of the 50S ribosomal subunit.

The chain is Large ribosomal subunit protein bL31B from Salmonella arizonae (strain ATCC BAA-731 / CDC346-86 / RSK2980).